A 368-amino-acid chain; its full sequence is H-2 class I histocompatibility antigen, K-D alpha chain (368 aa).

Positions 1–21 (MAPCTLLLLLAAALAPTQTRA) are cleaved as a signal peptide. The alpha-1 stretch occupies residues 22 to 111 (GPHSLRYFVT…AQRYYNQSKG (90 aa)). Residues 22-305 (GPHSLRYFVT…KLPPSTVSNT (284 aa)) are Extracellular-facing. A glycan (N-linked (GlcNAc...) asparagine) is linked at Asn107. Positions 112-203 (GSHTFQRMFG…ELGNETLLRT (92 aa)) are alpha-2. Cys122 and Cys185 are oxidised to a cystine. Residues Asn197 and Asn277 are each glycosylated (N-linked (GlcNAc...) asparagine). The interval 204–295 (DSPKAHVTYH…GLPEPLTLRW (92 aa)) is alpha-3. One can recognise an Ig-like C1-type domain in the interval 206–294 (PKAHVTYHPR…KGLPEPLTLR (89 aa)). Cys224 and Cys280 are joined by a disulfide. Residues 296–305 (KLPPSTVSNT) are connecting peptide. The chain crosses the membrane as a helical span at residues 306-328 (VIIAVLVVLGAAIVTGAVVAFVM). Residues 329–368 (KMRRNTGGKGVNYALAPGSQTSDLSLPDGKVMVHDPHSLA) are Cytoplasmic-facing. Phosphoserine is present on residues Ser350 and Ser353.

It belongs to the MHC class I family. Heterodimer of an alpha chain and a beta chain (beta-2-microglobulin).

The protein localises to the membrane. Involved in the presentation of foreign antigens to the immune system. The polypeptide is H-2 class I histocompatibility antigen, K-D alpha chain (H2-K1) (Mus musculus (Mouse)).